Here is a 49-residue protein sequence, read N- to C-terminus: Defensin Tk-AMP-D1 (49 aa).

4 disulfide bridges follow: Cys3–Cys49, Cys14–Cys34, Cys20–Cys43, and Cys24–Cys45.

Its function is as follows. Has weak antifungal activity against F.graminearum and F.verticillioides below 30 ug/ml, but not against A.consortiale B.cinerea, H.sativum, F.culmorum, C.graminicola and D.maydis. The chain is Defensin Tk-AMP-D1 from Triticum kiharae (Wheat).